Here is a 72-residue protein sequence, read N- to C-terminus: Tetrahydromethanopterin S-methyltransferase subunit G (72 aa).

A helical membrane pass occupies residues 48–68; it reads IGILYGGFIGLLLFLIYTVVS.

Belongs to the MtrG family. The complex is composed of 8 subunits; MtrA, MtrB, MtrC, MtrD, MtrE, MtrF, MtrG and MtrH.

The protein resides in the cell membrane. It catalyses the reaction 5-methyl-5,6,7,8-tetrahydromethanopterin + coenzyme M + 2 Na(+)(in) = 5,6,7,8-tetrahydromethanopterin + methyl-coenzyme M + 2 Na(+)(out). The protein operates within one-carbon metabolism; methanogenesis from CO(2); methyl-coenzyme M from 5,10-methylene-5,6,7,8-tetrahydromethanopterin: step 2/2. Functionally, part of a complex that catalyzes the formation of methyl-coenzyme M and tetrahydromethanopterin from coenzyme M and methyl-tetrahydromethanopterin. This is an energy-conserving, sodium-ion translocating step. This Methanosarcina barkeri (strain Fusaro / DSM 804) protein is Tetrahydromethanopterin S-methyltransferase subunit G.